The sequence spans 956 residues: MAM domain-containing glycosylphosphatidylinositol anchor protein 1 (956 aa).

The signal sequence occupies residues 1 to 18 (MEVTCLLLLALIPFHCRG). 2 Ig-like domains span residues 24–123 (PAQA…KSIR) and 132–230 (PVLT…KSIT). Asparagine 42 is a glycosylation site (N-linked (GlcNAc...) asparagine). 2 disulfides stabilise this stretch: cysteine 60–cysteine 108 and cysteine 157–cysteine 214. 3 N-linked (GlcNAc...) asparagine glycosylation sites follow: asparagine 235, asparagine 257, and asparagine 307. 4 Ig-like domains span residues 240 to 323 (PTLK…KTVN), 338 to 432 (PDMI…VEVN), 440 to 534 (PTIS…VQLT), and 539 to 632 (PEVE…FQVS). 4 disulfide bridges follow: cysteine 262–cysteine 308, cysteine 357–cysteine 415, cysteine 463–cysteine 514, and cysteine 560–cysteine 616. In terms of domain architecture, Fibronectin type-III spans 644-744 (TPNPTRSHKL…SRVIHYTEPI (101 aa)). One can recognise an MAM domain in the interval 752 to 919 (NTCHFEDEKI…VTLKKGECPR (168 aa)). Over residues 780–789 (LTQNPKRSPN) the composition is skewed to polar residues. The tract at residues 780 to 799 (LTQNPKRSPNTGPPTDISGT) is disordered. Serine 933 carries GPI-anchor amidated serine lipidation. Residues 934–956 (GAPRLSSLQLWGSMTIFLLALQR) constitute a propeptide, removed in mature form.

As to quaternary structure, interacts heterophilically through its MAM domain with proteins in axon-rich regions and through its Ig-like domains with proteins in differentiating muscle. Interacts (through the Ig-like domains) with NLGN2. In terms of tissue distribution, high levels detected in developing central and peripheral nervous systems with little expression elsewhere. In brain, highest levels in cerebral cortex and hindbrain at E15. At postnatal day 1, highest levels in basilar pons and superficial layers of the neocortex. In the developing spinal cord, restricted to a subpopulation of neurons in the dorsal and spinal ventral cord, probably D1 interneurons. Expressed in brain.

Its subcellular location is the cell membrane. Functionally, required for radial migration of cortical neurons in the superficial layer of the neocortex. Plays a role in the formation or maintenance of inhibitory synapses. May function by inhibiting the activity of NLGN2. The chain is MAM domain-containing glycosylphosphatidylinositol anchor protein 1 (Mdga1) from Rattus norvegicus (Rat).